The chain runs to 121 residues: MSAVAENIQTEMPAPIVFTDSAAAKVADLIAEEGNPDLKLRVFVQGGGCSGFQYGFTFDEITNEDDTTMTKNGVSLLIDAMSYQYLVGAEIDYKEDLQGAQFVIKNPNATTTCGCGSSFSV.

Positions 49, 113, and 115 each coordinate iron-sulfur cluster.

The protein belongs to the HesB/IscA family. In terms of assembly, homodimer. It depends on iron-sulfur cluster as a cofactor.

Required for insertion of 4Fe-4S clusters. This chain is Putative iron-sulfur cluster insertion protein ErpA, found in Paracidovorax citrulli (strain AAC00-1) (Acidovorax citrulli).